The primary structure comprises 181 residues: MASAGSGMEEVRVSVLTPLKLVGLVCIFLALCLDLGAVLSPAWVTADHQYYLSLWESCRKPANLDIWHCESTLGSDWQIATLALLLGGAAIILIAFLVGLISICVGSRRRFYRPVAVMLFAAVVLQVCSLVLYPIKFIETVSLKIYHEFNWGYGLAWGATIFSFGGAILYCLNPKNYEDYY.

Position 2 is an N-acetylalanine (Ala-2). The next 4 membrane-spanning stretches (helical) occupy residues 21–41 (LVGLVCIFLALCLDLGAVLSP), 83–103 (ALLLGGAAIILIAFLVGLISI), 115–135 (VAVMLFAAVVLQVCSLVLYPI), and 152–172 (GYGLAWGATIFSFGGAILYCL).

The protein belongs to the TMEM47 family. Interacts with CTNNB1, CTNNA1, PRKCI, PARD6B. Interacts with FYB1. Expressed in podocytes (at protein level).

The protein localises to the membrane. It localises to the cell junction. The protein resides in the adherens junction. Its function is as follows. Regulates cell junction organization in epithelial cells. May play a role in the transition from adherens junction to tight junction assembly. May regulate F-actin polymerization required for tight junctional localization dynamics and affect the junctional localization of PARD6B. During podocyte differentiation may negatively regulate activity of FYN and subsequently the abundance of nephrin. The chain is Transmembrane protein 47 (Tmem47) from Mus musculus (Mouse).